A 138-amino-acid chain; its full sequence is Basic phospholipase A2 homolog acutohaemolysin (138 aa).

The signal sequence occupies residues 1–16 (MRALWIVAVLLVGVEG). 7 cysteine pairs are disulfide-bonded: Cys42–Cys131, Cys44–Cys60, Cys59–Cys111, Cys65–Cys138, Cys66–Cys104, Cys73–Cys97, and Cys91–Cys102. The interval 121 to 133 (KSFRYHLKPSCKK) is important for membrane-damaging activities in eukaryotes and bacteria; heparin-binding.

As to quaternary structure, monomer. As to expression, expressed by the venom gland.

Its subcellular location is the secreted. Snake venom phospholipase A2 homolog that lacks enzymatic activity. Is myotoxic. Has a strong indirect hemolytic activity and anticoagulant activity. A model of myotoxic mechanism has been proposed: an apo Lys49-PLA2 is activated by the entrance of a hydrophobic molecule (e.g. fatty acid) at the hydrophobic channel of the protein leading to a reorientation of a monomer. This reorientation causes a transition between 'inactive' to 'active' states, causing alignment of C-terminal and membrane-docking sites (MDoS) side-by-side and putting the membrane-disruption sites (MDiS) in the same plane, exposed to solvent and in a symmetric position for both monomers. The MDoS region stabilizes the toxin on membrane by the interaction of charged residues with phospholipid head groups. Subsequently, the MDiS region destabilizes the membrane with penetration of hydrophobic residues. This insertion causes a disorganization of the membrane, allowing an uncontrolled influx of ions (i.e. calcium and sodium), and eventually triggering irreversible intracellular alterations and cell death. This Deinagkistrodon acutus (Hundred-pace snake) protein is Basic phospholipase A2 homolog acutohaemolysin.